The following is a 660-amino-acid chain: DNA ligase (660 aa).

NAD(+)-binding positions include 33–37 (DFVYD), 82–83 (SL), and Glu110. Lys112 (N6-AMP-lysine intermediate) is an active-site residue. The NAD(+) site is built by Arg133, Glu167, Lys281, and Lys305. Zn(2+)-binding residues include Cys396, Cys399, Cys412, and Cys417. The region spanning 583-660 (DENKLLVGKK…SFEDIKSYLD (78 aa)) is the BRCT domain.

The protein belongs to the NAD-dependent DNA ligase family. LigA subfamily. It depends on Mg(2+) as a cofactor. The cofactor is Mn(2+).

The catalysed reaction is NAD(+) + (deoxyribonucleotide)n-3'-hydroxyl + 5'-phospho-(deoxyribonucleotide)m = (deoxyribonucleotide)n+m + AMP + beta-nicotinamide D-nucleotide.. Functionally, DNA ligase that catalyzes the formation of phosphodiester linkages between 5'-phosphoryl and 3'-hydroxyl groups in double-stranded DNA using NAD as a coenzyme and as the energy source for the reaction. It is essential for DNA replication and repair of damaged DNA. This is DNA ligase from Borreliella afzelii (strain PKo) (Borrelia afzelii).